Reading from the N-terminus, the 317-residue chain is Transcription factor MYB35 (317 aa).

HTH myb-type domains lie at 9–65 (KSNV…RPDL) and 66–116 (KHDS…KKKL). 2 DNA-binding regions (H-T-H motif) span residues 37–61 (WSLIPKKAGLNRCGKSCRLRWTNYL) and 89–112 (WSSIARKLPGRTDNDVKNHWNTKL).

Inflorescences-specific. Accumulates in anthers, especially in tapetum and meiocytes/microsporocytes and microspores during anther development.

It is found in the nucleus. In terms of biological role, required for anther development and early tapetal function during microspore maturation. Regulates callose dissolution required for microspores release from the tetrads. The sequence is that of Transcription factor MYB35 from Arabidopsis thaliana (Mouse-ear cress).